An 82-amino-acid chain; its full sequence is Small ribosomal subunit protein bS16 (82 aa).

The protein belongs to the bacterial ribosomal protein bS16 family.

This chain is Small ribosomal subunit protein bS16, found in Blochmanniella floridana.